We begin with the raw amino-acid sequence, 349 residues long: 4-hydroxythreonine-4-phosphate dehydrogenase (349 aa).

Residue threonine 136 coordinates substrate. Histidine 171, histidine 216, and histidine 281 together coordinate a divalent metal cation. Substrate contacts are provided by lysine 289, asparagine 298, and arginine 307.

Belongs to the PdxA family. Homodimer. A divalent metal cation is required as a cofactor.

Its subcellular location is the cytoplasm. The enzyme catalyses 4-(phosphooxy)-L-threonine + NAD(+) = 3-amino-2-oxopropyl phosphate + CO2 + NADH. The protein operates within cofactor biosynthesis; pyridoxine 5'-phosphate biosynthesis; pyridoxine 5'-phosphate from D-erythrose 4-phosphate: step 4/5. Catalyzes the NAD(P)-dependent oxidation of 4-(phosphooxy)-L-threonine (HTP) into 2-amino-3-oxo-4-(phosphooxy)butyric acid which spontaneously decarboxylates to form 3-amino-2-oxopropyl phosphate (AHAP). This chain is 4-hydroxythreonine-4-phosphate dehydrogenase, found in Synechocystis sp. (strain ATCC 27184 / PCC 6803 / Kazusa).